Reading from the N-terminus, the 346-residue chain is MADTHKISFEPVDIEMEVGEDETILDAAFRQGIHLMHGCREGRCSCKSYMLEGDVQMDDYSTFACNDAEEAEGYVLLCRTYAYSDCEIELLNFDEDELLGGAPIQDVTTKVAAIEPMTPDIVSLKLDVVEPESVEFKSGQYFDLFIPGTEDKRSFSIATTPATPDRLEFLIKKYPGGLFAGMLTDGLSVGQEIKLNGPYGSCTLRNGHVLPIVAIGGGAGMAPLLSLLRHISETGLNRPVRFYYGARTAADLFLLDEIATLGEKIDDFSFTACLSESTDNAPEGVTVIGGNVTDIVNDNEADLARTEVYFCAPPPMVDAALALAEQHSVPHDQIFYDKFTSPAFDS.

In terms of domain architecture, 2Fe-2S ferredoxin-type spans 5-94 (HKISFEPVDI…DCEIELLNFD (90 aa)). [2Fe-2S] cluster is bound by residues C39, C44, C46, and C78. The region spanning 104–205 (IQDVTTKVAA…NGPYGSCTLR (102 aa)) is the FAD-binding FR-type domain.

Belongs to the bacterial ring-hydroxylating dioxygenase ferredoxin reductase family. In terms of assembly, the propane 2-monooxygenase multicomponent enzyme system is composed of an electron transfer component and a monooxygenase component interacting with the effector protein PrmD. The electron transfer component is composed of a reductase (PrmB), and the monooxygenase component is formed by a large subunit (PrmA) and a small subunit (PrmC). FAD serves as cofactor. The cofactor is [2Fe-2S] cluster.

Functionally, reductase component of the propane 2-monooxygenase multicomponent enzyme system which is involved in the degradation of propane via the O2-dependent hydroxylation of propane. Reductase catalyzes the transfer of electrons from NADH or NADPH to monooxygenase. The protein is Propane 2-monooxygenase, reductase component of Gordonia sp. (strain TY-5).